Here is a 509-residue protein sequence, read N- to C-terminus: Pancreatic secretory granule membrane major glycoprotein GP2 (509 aa).

An N-terminal signal peptide occupies residues 1–21 (MVGSYVLWLALASCILTLASP). The interval 36 to 56 (DPCQNYTLLDEPSRSTENTEG) is D10C. 10 disulfide bridges follow: C38–C132, C60–C147, C82–C120, C88–C152, C113–C121, C162–C172, C166–C181, C183–C213, C201–C292, and C233–C256. 3 N-linked (GlcNAc...) asparagine glycosylation sites follow: N40, N97, and N109. In terms of domain architecture, EGF-like spans 158 to 202 (ATDKCKNLCRPEEACSFLNGTWDCFCRSDLNSSDVHSLQPRLNCG). Residues N176, N188, and N232 are each glycosylated (N-linked (GlcNAc...) asparagine). The ZP-N stretch occupies residues 200–293 (NCGAKEIQVS…TILNINFQCA (94 aa)). Residues 200 to 456 (NCGAKEIQVS…PCCSRSQQRS (257 aa)) enclose the ZP domain. N-linked (GlcNAc...) asparagine glycans are attached at residues N263 and N314. A flexible ZP-N/ZP-C linker region spans residues 294-317 (YPLDMKVSLQTALHPIVSSLNISV). The interval 318-329 (DGEGEFTVRMAL) is internal hydrophobic patch (IHP). The segment at 318 to 456 (DGEGEFTVRM…PCCSRSQQRS (139 aa)) is ZP-C. 3 disulfides stabilise this stretch: C373-C433, C394-C449, and C438-C445. Residues 463-471 (PARVLDLGP) form an external hydrophobic patch (EHP) region. D484 carries the GPI-anchor amidated aspartate lipid modification. A propeptide spans 485-509 (GTPSTAGFLLAWPMLLLPILLAELF) (removed in mature form).

As to quaternary structure, interacts with SYCN. Interacts with bacterial adhesin fimH. Post-translationally, N-glycosylated. As to expression, expressed in pancreas.

It is found in the zymogen granule membrane. The protein resides in the secreted. The protein localises to the cell membrane. It localises to the apical cell membrane. Its subcellular location is the membrane raft. It is found in the endosome. In terms of biological role, functions as an intestinal M-cell transcytotic receptor specific of type-I-piliated bacteria that participates in the mucosal immune response toward these bacteria. At the apical membrane of M-cells it binds fimH, a protein of the bacteria type I pilus tip. Internalizes bound bacteria, like E.coli and S.typhimurium, from the lumen of the intestine and delivers them, through M-cells, to the underlying organized lymphoid follicles where they are captured by antigen-presenting dendritic cells to elicit a mucosal immune response. In Canis lupus familiaris (Dog), this protein is Pancreatic secretory granule membrane major glycoprotein GP2.